A 472-amino-acid polypeptide reads, in one-letter code: 4-O-methyl-glucuronoyl methylesterase 1 (472 aa).

An N-terminal signal peptide occupies residues 1–20 (MKSAAYLAALAAVLPAYVNA). One can recognise a CBM1 domain in the interval 21-56 (QAQEWGQCGGIGWTGATTCVSGTVCTVLNPYYSQCL). The interval 62–97 (TAPPPPPPPPTSVSSSSSSSTSSAPPSGPSGTSPTC) is disordered. Residues 63-72 (APPPPPPPPT) are compositionally biased toward pro residues. The segment covering 73–96 (SVSSSSSSSTSSAPPSGPSGTSPT) has biased composition (low complexity). Intrachain disulfides connect cysteine 97–cysteine 131, cysteine 283–cysteine 419, and cysteine 315–cysteine 391. A GXSYXG catalytic site motif motif is present at residues 282-287 (GCSRDG). The Nucleophile role is filled by serine 284. Residues lysine 288, glutamine 330, glutamate 338, and tryptophan 382 each coordinate substrate. Catalysis depends on histidine 418, which acts as the Proton donor/acceptor. Asparagine 465 carries N-linked (GlcNAc...) asparagine glycosylation.

The protein belongs to the carbohydrate esterase 15 (CE15) family.

It is found in the secreted. The catalysed reaction is a 4-O-methyl-alpha-D-glucuronosyl ester derivative + H2O = 4-O-methyl-alpha-D-glucuronate derivative + an alcohol + H(+). Glucuronoyl esterase which may play a significant role in biomass degradation, as it is considered to disconnect hemicellulose from lignin through the hydrolysis of the ester bond between 4-O-methyl-D-glucuronic acid residues of glucuronoxylans and aromatic alcohols of lignin. Can hydrolyze benzyl glucuronic acid (BnGlcA), allyl glucuronic acid (allylGlcA) and to a lower degree methyl glucuronic acid (MeGlcA) in vitro. The protein is 4-O-methyl-glucuronoyl methylesterase 1 of Phanerochaete chrysosporium (strain RP-78 / ATCC MYA-4764 / FGSC 9002) (White-rot fungus).